Here is a 1798-residue protein sequence, read N- to C-terminus: Non-reducing polyketide synthase nscA (1798 aa).

Positions 25–256 are N-terminal acylcarrier protein transacylase domain (SAT); that stretch reads RRLDQHSKDR…PLPVYDGLCH (232 aa). A Ketosynthase family 3 (KS3) domain is found at 392–825; the sequence is SSKLAIVGMA…GGNTTLLLED (434 aa). Active-site for beta-ketoacyl synthase activity residues include Cys565, His700, and His743. The tract at residues 931–1224 is malonyl-CoA:ACP transacylase (MAT) domain; sequence FTGQGAYYHG…LVRSMIPSAP (294 aa). Residues 1322–1458 form an N-terminal hotdog fold region; it reads HQITAETVRT…ATILFEDPGA (137 aa). In terms of domain architecture, PKS/mFAS DH spans 1322 to 1632; that stretch reads HQITAETVRT…FRRVPRLLMD (311 aa). The Proton acceptor; for dehydratase activity role is filled by His1354. Residues 1390 to 1628 form a product template (PT) domain region; sequence HMNLTDVEVL…GMIRFRRVPR (239 aa). The tract at residues 1486–1632 is C-terminal hotdog fold; it reads ASRLSKPLAY…FRRVPRLLMD (147 aa). Residue Asp1543 is the Proton donor; for dehydratase activity of the active site. The segment at 1695–1721 is disordered; that stretch reads LLATSSGDSTPKEPPIVTPAESERAGP. Positions 1721-1798 constitute a Carrier domain; it reads PVDNNMISQC…EMTAWIEEYC (78 aa). The residue at position 1758 (Ser1758) is an O-(pantetheine 4'-phosphoryl)serine.

Requires pantetheine 4'-phosphate as cofactor.

It functions in the pathway secondary metabolite biosynthesis. In terms of biological role, non-reducing polyketide synthase; part of the gene cluster that mediates the biosynthesis of neosartoricin B, a prenylated anthracenone that probably exhibits T-cell antiproliferative activity, suggestive of a physiological role as an immunosuppressive agent. The non-reducing polyketide synthase nscA probably synthesizes and cyclizes the decaketide backbone. The hydrolase nscB then mediates the product release through hydrolysis followed by spontaneous decarboxylation. The prenyltransferase nscD catalyzes the addition of the dimethylallyl group to the aromatic C5. The FAD-dependent monooxygenase nscC is then responsible for the stereospecific hydroxylation at C2. Neosartoricin B can be converted into two additional compounds neosartoricins C and D. Neosartoricin C is a spirocyclic compound that is cyclized through the attack of C3 hydroxyl on C14, followed by dehydration. On the other hand, neosartoricin D is a further cyclized compound in which attack of C2 on C14 in neosartoricin C results in the formation of the acetal-containing dioxabicyclo-octanone ring. Both of these compounds are novel and possibly represent related metabolites of the gene cluster. The protein is Non-reducing polyketide synthase nscA of Trichophyton rubrum (strain ATCC MYA-4607 / CBS 118892) (Athlete's foot fungus).